Here is a 207-residue protein sequence, read N- to C-terminus: Histone H1 (207 aa).

Over residues Met-1–Lys-15 the composition is skewed to low complexity. Disordered stretches follow at residues Met-1 to Ala-28 and Glu-105 to Lys-207. Position 2 is an N-acetylalanine (Ala-2). Residues Ala-16–Lys-27 show a composition bias toward basic residues. Positions Ala-28–Lys-101 constitute an H15 domain. Basic residues-rich tracts occupy residues Lys-117 to Lys-168 and Lys-175 to Lys-207.

It belongs to the histone H1/H5 family. In terms of tissue distribution, oncorhyncin II is expressed in skin.

It is found in the nucleus. Its subcellular location is the chromosome. It localises to the secreted. Histones H1 are necessary for the condensation of nucleosome chains into higher-order structures. In terms of biological role, oncorhyncin II has antibacterial activity against Gram-positive and Gram-negative bacteria at submicromolar concentrations. Potentially important role in mucosal defense. The polypeptide is Histone H1 (Oncorhynchus mykiss (Rainbow trout)).